A 156-amino-acid chain; its full sequence is Low molecular weight protein-tyrosine-phosphatase YfkJ (156 aa).

The Nucleophile role is filled by C8. The active site involves R14. D125 acts as the Proton donor in catalysis.

It belongs to the low molecular weight phosphotyrosine protein phosphatase family.

It carries out the reaction O-phospho-L-tyrosyl-[protein] + H2O = L-tyrosyl-[protein] + phosphate. Efficiently inhibited by Cu(2+) ion, Zn(2+) ion and N-ethylmaleimide, while the addition of Mg(2+), Ca(2+) or Fe(3+) ions has minimal effect. Inhibited in a competitive manner by vanadate. In terms of biological role, dephosphorylates the phosphotyrosine-containing proteins. Involved in ethanol stress resistance. The protein is Low molecular weight protein-tyrosine-phosphatase YfkJ (yfkJ) of Bacillus subtilis (strain 168).